Consider the following 599-residue polypeptide: UvrABC system protein C (599 aa).

Residues 15 to 93 (DNPGVYQYYD…IKTLQPRYNI (79 aa)) form the GIY-YIG domain. One can recognise a UVR domain in the interval 207-242 (KDSMKDFKKVMTNLAQNMHFEEAQKIKEKIEILENY).

The protein belongs to the UvrC family. Interacts with UvrB in an incision complex.

It localises to the cytoplasm. Its function is as follows. The UvrABC repair system catalyzes the recognition and processing of DNA lesions. UvrC both incises the 5' and 3' sides of the lesion. The N-terminal half is responsible for the 3' incision and the C-terminal half is responsible for the 5' incision. This is UvrABC system protein C from Flavobacterium psychrophilum (strain ATCC 49511 / DSM 21280 / CIP 103535 / JIP02/86).